A 185-amino-acid chain; its full sequence is Large ribosomal subunit protein uL5 (185 aa).

The protein belongs to the universal ribosomal protein uL5 family. Part of the 50S ribosomal subunit; part of the 5S rRNA/L5/L18/L25 subcomplex. Contacts the 5S rRNA and the P site tRNA. Forms a bridge to the 30S subunit in the 70S ribosome.

Its function is as follows. This is one of the proteins that bind and probably mediate the attachment of the 5S RNA into the large ribosomal subunit, where it forms part of the central protuberance. In the 70S ribosome it contacts protein S13 of the 30S subunit (bridge B1b), connecting the 2 subunits; this bridge is implicated in subunit movement. Contacts the P site tRNA; the 5S rRNA and some of its associated proteins might help stabilize positioning of ribosome-bound tRNAs. The polypeptide is Large ribosomal subunit protein uL5 (Rhizobium rhizogenes (strain K84 / ATCC BAA-868) (Agrobacterium radiobacter)).